Consider the following 160-residue polypeptide: SsrA-binding protein (160 aa).

Positions 130–160 (LAKGKKKHDKRADQKEQDWQRQKQRLMKHKV) are disordered. The segment covering 139 to 150 (KRADQKEQDWQR) has biased composition (basic and acidic residues). A compositionally biased stretch (basic residues) spans 151–160 (QKQRLMKHKV).

Belongs to the SmpB family.

The protein resides in the cytoplasm. Required for rescue of stalled ribosomes mediated by trans-translation. Binds to transfer-messenger RNA (tmRNA), required for stable association of tmRNA with ribosomes. tmRNA and SmpB together mimic tRNA shape, replacing the anticodon stem-loop with SmpB. tmRNA is encoded by the ssrA gene; the 2 termini fold to resemble tRNA(Ala) and it encodes a 'tag peptide', a short internal open reading frame. During trans-translation Ala-aminoacylated tmRNA acts like a tRNA, entering the A-site of stalled ribosomes, displacing the stalled mRNA. The ribosome then switches to translate the ORF on the tmRNA; the nascent peptide is terminated with the 'tag peptide' encoded by the tmRNA and targeted for degradation. The ribosome is freed to recommence translation, which seems to be the essential function of trans-translation. The protein is SsrA-binding protein of Alkalilimnicola ehrlichii (strain ATCC BAA-1101 / DSM 17681 / MLHE-1).